Reading from the N-terminus, the 143-residue chain is Sec-independent protein translocase protein TatB (143 aa).

Residues 2-22 traverse the membrane as a helical segment; the sequence is FGNIGWGEFMVLLVAALVILG. The segment at 97-143 is disordered; it reads FDKPGSVSFDKSNPGTKAVSADPSTPTAPQNKPLAAGERPPIDLDAT.

It belongs to the TatB family. The Tat system comprises two distinct complexes: a TatABC complex, containing multiple copies of TatA, TatB and TatC subunits, and a separate TatA complex, containing only TatA subunits. Substrates initially bind to the TatABC complex, which probably triggers association of the separate TatA complex to form the active translocon.

It is found in the cell membrane. Part of the twin-arginine translocation (Tat) system that transports large folded proteins containing a characteristic twin-arginine motif in their signal peptide across membranes. Together with TatC, TatB is part of a receptor directly interacting with Tat signal peptides. TatB may form an oligomeric binding site that transiently accommodates folded Tat precursor proteins before their translocation. This chain is Sec-independent protein translocase protein TatB, found in Rhodococcus opacus (strain B4).